We begin with the raw amino-acid sequence, 257 residues long: Nickel import system ATP-binding protein NikD (257 aa).

The ABC transporter domain maps to 4 to 245 (IDIQNLTIKN…HLHPYTERLI (242 aa)). 37–44 (GESGAGKS) serves as a coordination point for ATP.

The protein belongs to the ABC transporter superfamily. The complex is composed of two ATP-binding proteins (NikD and NikE), two transmembrane proteins (NikB and NikC) and a solute-binding protein (NikA).

It localises to the cell membrane. It catalyses the reaction Ni(2+)(out) + ATP + H2O = Ni(2+)(in) + ADP + phosphate + H(+). Functionally, part of the ABC transporter complex NikABCDE (Opp2) involved in nickel import. Probably responsible for energy coupling to the transport system. The sequence is that of Nickel import system ATP-binding protein NikD from Staphylococcus aureus (strain Mu50 / ATCC 700699).